Here is a 340-residue protein sequence, read N- to C-terminus: Methionine import ATP-binding protein MetN (340 aa).

In terms of domain architecture, ABC transporter spans 8–246 (ISVKNLNKEI…PYSSITEELF (239 aa)). Residue 40–47 (GHSGSGKS) participates in ATP binding.

It belongs to the ABC transporter superfamily. Methionine importer (TC 3.A.1.24) family. The complex is composed of two ATP-binding proteins (MetN), two transmembrane proteins (MetI) and a solute-binding protein (MetQ).

It localises to the cell inner membrane. The enzyme catalyses L-methionine(out) + ATP + H2O = L-methionine(in) + ADP + phosphate + H(+). The catalysed reaction is D-methionine(out) + ATP + H2O = D-methionine(in) + ADP + phosphate + H(+). Its function is as follows. Part of the ABC transporter complex MetNIQ involved in methionine import. Responsible for energy coupling to the transport system. This Chlamydia felis (strain Fe/C-56) (Chlamydophila felis) protein is Methionine import ATP-binding protein MetN.